A 139-amino-acid polypeptide reads, in one-letter code: MNFKYIIAVSFLIASAYARSVQNDEQSLSQRDVLEEESLREIRGIGGVLLSAGKAALKGLAKVLAEKYANGKRTAEEHEVMKRLEAVMRDLDSLDHPEEASERETRGFNQDEIAKEKRILGPVLGLVGNALGGLIKKIG.

Residues 1–18 (MNFKYIIAVSFLIASAYA) form the signal peptide. A propeptide spanning residues 19-43 (RSVQNDEQSLSQRDVLEEESLREIR) is cleaved from the precursor. Asparagine amide is present on Asn-70. The propeptide occupies 74 to 118 (TAEEHEVMKRLEAVMRDLDSLDHPEEASERETRGFNQDEIAKEKR). An Isoleucine amide modification is found at Ile-138.

It belongs to the bombinin family. In terms of tissue distribution, expressed by the skin glands.

Its subcellular location is the secreted. Functionally, maximin-4 shows antibacterial activity against both Gram-positive and Gram-negative bacteria. It also shows antimicrobial activity against the fungus C.albicans, but not against A.flavus nor P.uticale. It has little hemolytic activity. It does not possess a significant cytotoxicity against tumor cell lines. It does not possess a significant anti-HIV activity. In terms of biological role, maximin-H3 shows antibacterial activity against both Gram-positive and Gram-negative bacteria. It also shows antimicrobial activity against the fungus C.albicans. Shows strong hemolytic activity. This chain is Maximins 4/H3 type 4, found in Bombina maxima (Giant fire-bellied toad).